We begin with the raw amino-acid sequence, 488 residues long: Replication-associated protein (488 aa).

The tract at residues Pro462–Ser488 is disordered.

Its subcellular location is the host nucleus. In terms of biological role, plays an essential for the replication of viral DNA. Presumably cleaves viral genomic dsRNA replicative form to initiate rolling circle replication. This is Replication-associated protein from Chaetoceros diatodnavirus 1 (Chaetoceros setoense DNA virus).